Consider the following 229-residue polypeptide: Ribonuclease 3 (229 aa).

Residues 5–127 enclose the RNase III domain; the sequence is LDRLERKLGY…LIGAIYLDTG (123 aa). Glu40 is a Mg(2+) binding site. Asp44 is a catalytic residue. 2 residues coordinate Mg(2+): Asp113 and Glu116. The active site involves Glu116. The DRBM domain maps to 154–224; that stretch reads DPKTRLQEFL…AAAALVALGV (71 aa).

The protein belongs to the ribonuclease III family. In terms of assembly, homodimer. Requires Mg(2+) as cofactor.

It is found in the cytoplasm. It carries out the reaction Endonucleolytic cleavage to 5'-phosphomonoester.. Its function is as follows. Digests double-stranded RNA. Involved in the processing of primary rRNA transcript to yield the immediate precursors to the large and small rRNAs (23S and 16S). Processes some mRNAs, and tRNAs when they are encoded in the rRNA operon. Processes pre-crRNA and tracrRNA of type II CRISPR loci if present in the organism. This is Ribonuclease 3 from Pseudomonas paraeruginosa (strain DSM 24068 / PA7) (Pseudomonas aeruginosa (strain PA7)).